The following is a 609-amino-acid chain: All-trans-retinol 13,14-reductase (609 aa).

The first 21 residues, 1–21 (MWITALLLVVLLLVVVHRVYV), serve as a signal peptide directing secretion.

The protein belongs to the carotenoid/retinoid oxidoreductase family. CrtISO subfamily. NAD(+) serves as cofactor. NADP(+) is required as a cofactor. Requires FAD as cofactor. In terms of tissue distribution, highly expressed in liver, kidney and heart.

Its subcellular location is the endoplasmic reticulum membrane. The enzyme catalyses all-trans-13,14-dihydroretinol + A = all-trans-retinol + AH2. Its function is as follows. Catalyzes the saturation of all-trans-retinol to all-trans-13,14-dihydroretinol. Does not exhibit any activity toward all-trans-retinoic acid, nor 9-cis, 11-cis or 13-cis-retinol isomers. May play a role in the metabolism of vitamin A. Independently of retinol conversion, may regulate liver metabolism upstream of MLXIPL/ChREBP. May play a role in adipocyte differentiation. In Rattus norvegicus (Rat), this protein is All-trans-retinol 13,14-reductase (Retsat).